Reading from the N-terminus, the 384-residue chain is Probable zinc-binding alcohol dehydrogenase Rv1895 (384 aa).

Zn(2+) is bound by residues Cys38, His59, Cys89, Cys92, Cys95, and Cys103.

Belongs to the zinc-containing alcohol dehydrogenase family. The cofactor is Zn(2+).

The enzyme catalyses a primary alcohol + NAD(+) = an aldehyde + NADH + H(+). It catalyses the reaction a secondary alcohol + NAD(+) = a ketone + NADH + H(+). The chain is Probable zinc-binding alcohol dehydrogenase Rv1895 from Mycobacterium tuberculosis (strain ATCC 25618 / H37Rv).